We begin with the raw amino-acid sequence, 465 residues long: MAKTLYQKVFDAHVVREVDGETPLIYIDRHLVHEVTSPQAFDGLRAMNRPLRRPDLTWATMDHNVSTTTKDIAASGEMARIQMETLADNCKEFGVRLYDLNHKYQGIVHVMGPELGITLPGTTIVCGDSHTATHGAFGSLAFGIGTSEVEHVMATQTLKQGRAKTMRISVNGKLAEGISAKDVVLAIIGQVGHAGGTGYVVEFAGEAIAGLSMEGRMTVCNMAIELGAKAGMIAPDQTTIDYIRGKEFAPKGESLDQAIAYWLSLKSDQGAHFDAEVILDAADIAPQVTWGTNPGQVIAVNEPIPAPESFSDLMEQQSARKALAYMDLQPGQKLTDVAIDKVFIGSCTNSRIEDLRAAAAIARGRKVAAGVQALVVPGSEQVKAQAEAEGLDKIFLEAGFEWRLPGCSMCLAMNNDRLQPGERCASTSNRNFEGRQGRAGRTHLVSPAMAAAAAVTGRFADIRAL.

[4Fe-4S] cluster-binding residues include Cys347, Cys407, and Cys410.

This sequence belongs to the aconitase/IPM isomerase family. LeuC type 1 subfamily. In terms of assembly, heterodimer of LeuC and LeuD. [4Fe-4S] cluster serves as cofactor.

It catalyses the reaction (2R,3S)-3-isopropylmalate = (2S)-2-isopropylmalate. It functions in the pathway amino-acid biosynthesis; L-leucine biosynthesis; L-leucine from 3-methyl-2-oxobutanoate: step 2/4. Functionally, catalyzes the isomerization between 2-isopropylmalate and 3-isopropylmalate, via the formation of 2-isopropylmaleate. The polypeptide is 3-isopropylmalate dehydratase large subunit (Aeromonas salmonicida (strain A449)).